The chain runs to 448 residues: Deoxyguanosinetriphosphate triphosphohydrolase-like protein (448 aa).

The region spanning 67–260 (RLTHSLEVSQ…MELADDIAYG (194 aa)) is the HD domain.

The protein belongs to the dGTPase family. Type 2 subfamily.

The sequence is that of Deoxyguanosinetriphosphate triphosphohydrolase-like protein from Aliivibrio fischeri (strain MJ11) (Vibrio fischeri).